The sequence spans 159 residues: Large ribosomal subunit protein uL11 (159 aa).

Residues 137–149 (EGKDPREVQREVD) are compositionally biased toward basic and acidic residues. Positions 137–159 (EGKDPREVQREVDSGAWDKLLGG) are disordered.

It belongs to the universal ribosomal protein uL11 family. As to quaternary structure, part of the ribosomal stalk of the 50S ribosomal subunit. Interacts with L10 and the large rRNA to form the base of the stalk. L10 forms an elongated spine to which L12 dimers bind in a sequential fashion forming a multimeric L10(L12)X complex.

Functionally, forms part of the ribosomal stalk which helps the ribosome interact with GTP-bound translation factors. This is Large ribosomal subunit protein uL11 from Korarchaeum cryptofilum (strain OPF8).